A 362-amino-acid polypeptide reads, in one-letter code: Probable dual-specificity RNA methyltransferase RlmN (362 aa).

E105 functions as the Proton acceptor in the catalytic mechanism. The Radical SAM core domain occupies 111–344 (HEYGNSICVT…VTIRREQGHD (234 aa)). A disulfide bond links C118 and C349. Residues C125, C129, and C132 each coordinate [4Fe-4S] cluster. S-adenosyl-L-methionine is bound by residues 175–176 (GE), S207, 230–232 (SLH), and N306. C349 serves as the catalytic S-methylcysteine intermediate.

It belongs to the radical SAM superfamily. RlmN family. The cofactor is [4Fe-4S] cluster.

Its subcellular location is the cytoplasm. The catalysed reaction is adenosine(2503) in 23S rRNA + 2 reduced [2Fe-2S]-[ferredoxin] + 2 S-adenosyl-L-methionine = 2-methyladenosine(2503) in 23S rRNA + 5'-deoxyadenosine + L-methionine + 2 oxidized [2Fe-2S]-[ferredoxin] + S-adenosyl-L-homocysteine. It carries out the reaction adenosine(37) in tRNA + 2 reduced [2Fe-2S]-[ferredoxin] + 2 S-adenosyl-L-methionine = 2-methyladenosine(37) in tRNA + 5'-deoxyadenosine + L-methionine + 2 oxidized [2Fe-2S]-[ferredoxin] + S-adenosyl-L-homocysteine. Functionally, specifically methylates position 2 of adenine 2503 in 23S rRNA and position 2 of adenine 37 in tRNAs. The chain is Probable dual-specificity RNA methyltransferase RlmN from Bacillus anthracis (strain A0248).